Consider the following 144-residue polypeptide: Large ribosomal subunit protein uL15 (144 aa).

The tract at residues 1–25 (MFLNTIGARDGSRPEKKRVGRGIGS) is disordered.

The protein belongs to the universal ribosomal protein uL15 family. Part of the 50S ribosomal subunit.

Its function is as follows. Binds to the 23S rRNA. The polypeptide is Large ribosomal subunit protein uL15 (Methylococcus capsulatus (strain ATCC 33009 / NCIMB 11132 / Bath)).